The chain runs to 359 residues: 4-hydroxyproline 2-epimerase (359 aa).

Residue cysteine 126 is the Proton acceptor of the active site. Residues 127 to 128, histidine 248, and aspartate 274 contribute to the substrate site; that span reads GH. Cysteine 278 (proton donor) is an active-site residue. 279–280 serves as a coordination point for substrate; sequence GT.

It belongs to the proline racemase family.

It carries out the reaction trans-4-hydroxy-L-proline = cis-4-hydroxy-D-proline. Its function is as follows. Catalyzes the epimerization of trans-4-hydroxy-L-proline (t4LHyp) to cis-4-hydroxy-D-proline (c4DHyp). Is likely involved in a degradation pathway that converts t4LHyp to alpha-ketoglutarate. Displays no proline racemase activity. This chain is 4-hydroxyproline 2-epimerase, found in Planctopirus limnophila (strain ATCC 43296 / DSM 3776 / IFAM 1008 / Mu 290) (Planctomyces limnophilus).